The chain runs to 100 residues: MELTPREKDKLLLFTAALVAERRLARGLKLNYPESVALISAFIMEGARDGKSVASLMEEGRHVLTREQVMEGVPEMIPDIQVEATFPDGSKLVTVHNPII.

This sequence belongs to the urease gamma subunit family. In terms of assembly, heterotrimer of UreA (gamma), UreB (beta) and UreC (alpha) subunits. Three heterotrimers associate to form the active enzyme. The apoenzyme interacts with an accessory complex composed of UreD, UreF and UreG, which is required for the assembly of the nickel containing metallocenter of UreC. The UreE protein may also play a direct role as a metallochaperone in nickel transfer to the urease apoprotein.

The protein localises to the cytoplasm. It carries out the reaction urea + 2 H2O + H(+) = hydrogencarbonate + 2 NH4(+). Its pathway is nitrogen metabolism; urea degradation; CO(2) and NH(3) from urea (urease route): step 1/1. The apoenzyme can be activated in vitro in the presence of nickel ions and carbon dioxide, which promotes carbamylation of 'Lys-217' of the UreC (alpha) subunit. The protein is Urease subunit gamma of Klebsiella aerogenes (Enterobacter aerogenes).